Reading from the N-terminus, the 584-residue chain is 65 kDa membrane protein (584 aa).

The first 30 residues, methionine 1–alanine 30, serve as a signal peptide directing secretion. 5 MAP repeats span residues glycine 45 to lysine 154, aspartate 156 to alanine 265, lysine 266 to arginine 374, tyrosine 375 to lysine 474, and alanine 475 to lysine 584.

It is found in the cell membrane. Functionally, binds various plasma and ECM-proteins. The sequence is that of 65 kDa membrane protein from Staphylococcus aureus (strain Newman).